Reading from the N-terminus, the 244-residue chain is Uridylate kinase (244 aa).

Residue 15 to 18 coordinates ATP; the sequence is KLSG. The involved in allosteric activation by GTP stretch occupies residues 23 to 28; sequence GSEGFG. Residue glycine 57 participates in UMP binding. Glycine 58 and arginine 62 together coordinate ATP. Residues aspartate 77 and 138–145 each bind UMP; that span reads TGNPFFTT. 3 residues coordinate ATP: threonine 165, phenylalanine 171, and aspartate 174.

The protein belongs to the UMP kinase family. Homohexamer.

It localises to the cytoplasm. The enzyme catalyses UMP + ATP = UDP + ADP. It functions in the pathway pyrimidine metabolism; CTP biosynthesis via de novo pathway; UDP from UMP (UMPK route): step 1/1. With respect to regulation, allosterically activated by GTP. Inhibited by UTP. In terms of biological role, catalyzes the reversible phosphorylation of UMP to UDP. The polypeptide is Uridylate kinase (Aeromonas salmonicida (strain A449)).